The following is a 411-amino-acid chain: Arginase (411 aa).

The interval 83 to 106 is disordered; it reads NNYINNNDNNNDNNNDNNNDNNNN. Residues His-193, Asp-216, His-218, and Asp-220 each contribute to the Mn(2+) site. Positions 222, 229, and 274 each coordinate L-arginine. Positions 323 and 325 each coordinate Mn(2+).

It belongs to the arginase family. In terms of assembly, homotrimer; oligomerization is dependent on Mn(2+) binding. Mn(2+) serves as cofactor.

It catalyses the reaction L-arginine + H2O = urea + L-ornithine. Its pathway is nitrogen metabolism; urea cycle; L-ornithine and urea from L-arginine: step 1/1. Its activity is regulated as follows. Feedback inhibition by product L-ornithine,. Inhibited by 2(S)-amino-6-boronohexanoic acid (ABH); however, with less efficiency than human ARG1. Catalyzes the hydrolysis of L-arginine into urea and L-ornithine, which is a precursor for polyamine biosynthesis. May play a role in parasite intra-hepatic development during the host liver stage. This chain is Arginase, found in Plasmodium falciparum (isolate 3D7).